The chain runs to 210 residues: HTH-type transcriptional repressor FabR (210 aa).

The region spanning 10 to 70 (KTRRSLVEAA…TMVDESGLML (61 aa)) is the HTH tetR-type domain. Positions 33-52 (SLREVAREAGIAPTSFYRHF) form a DNA-binding region, H-T-H motif.

As to quaternary structure, homodimer.

It localises to the cytoplasm. Represses the transcription of fabB, involved in unsaturated fatty acid (UFA) biosynthesis. By controlling UFA production, FabR directly influences the physical properties of the membrane bilayer. The chain is HTH-type transcriptional repressor FabR from Salmonella arizonae (strain ATCC BAA-731 / CDC346-86 / RSK2980).